A 363-amino-acid chain; its full sequence is MTDKSYKIAVLPGDGIGPEVMAQAHKVLDAIEQKHGISFEREEHDVGGIAIDNHGCPLPESTVTACEESDAVLFGSVGGPKWEHLPPNDQPERGALLPLRKHFQLFCNLRPAQIHAGLEAFSPLRADISGRGFDIVVVRELTGGIYFGQPKGREGEGANEKAFDTEVYHRYEIERIAKIAFESARLRRKKVCSIDKANVLQSSILWREVVEEIAKDYPDVELSHMYIDNATMQLIKDPAQFDVMLCSNIFGDIISDECAMITGSMGMLPSASLNESKFGLYEPAGGSAPDIAGKNIANPVAQILSAALMLRYSLGEEAAAQDIESAVSKALSAGELTADLASDKPALTTSEMGDKIAEYILNS.

Position 79 to 92 (79 to 92 (GPKWEHLPPNDQPE)) interacts with NAD(+). Arg-100, Arg-110, Arg-139, and Asp-228 together coordinate substrate. The Mg(2+) site is built by Asp-228, Asp-252, and Asp-256. Residue 286-298 (GSAPDIAGKNIAN) participates in NAD(+) binding.

The protein belongs to the isocitrate and isopropylmalate dehydrogenases family. LeuB type 1 subfamily. Homodimer. Mg(2+) serves as cofactor. It depends on Mn(2+) as a cofactor.

It is found in the cytoplasm. It catalyses the reaction (2R,3S)-3-isopropylmalate + NAD(+) = 4-methyl-2-oxopentanoate + CO2 + NADH. It participates in amino-acid biosynthesis; L-leucine biosynthesis; L-leucine from 3-methyl-2-oxobutanoate: step 3/4. Catalyzes the oxidation of 3-carboxy-2-hydroxy-4-methylpentanoate (3-isopropylmalate) to 3-carboxy-4-methyl-2-oxopentanoate. The product decarboxylates to 4-methyl-2 oxopentanoate. The chain is 3-isopropylmalate dehydrogenase from Vibrio parahaemolyticus serotype O3:K6 (strain RIMD 2210633).